The primary structure comprises 292 residues: Elongation factor Ts (292 aa).

An involved in Mg(2+) ion dislocation from EF-Tu region spans residues 82 to 85 (TDFV).

Belongs to the EF-Ts family.

Its subcellular location is the cytoplasm. Its function is as follows. Associates with the EF-Tu.GDP complex and induces the exchange of GDP to GTP. It remains bound to the aminoacyl-tRNA.EF-Tu.GTP complex up to the GTP hydrolysis stage on the ribosome. The chain is Elongation factor Ts from Bordetella parapertussis (strain 12822 / ATCC BAA-587 / NCTC 13253).